Here is a 563-residue protein sequence, read N- to C-terminus: (R)-mandelonitrile lyase 2 (563 aa).

The signal sequence occupies residues 1–27 (MEKSTMSAILLVLYIFVLHLQYSEVHS). FAD contacts are provided by residues 63–64 (TS), 82–83 (ER), Val129, Thr133, and 137–140 (NAGV). 2 N-linked (GlcNAc...) asparagine glycosylation sites follow: Asn145 and Asn162. Val244 is a binding site for FAD. Cys355 contacts substrate. N-linked (GlcNAc...) asparagine glycosylation is found at Asn379 and Asn419. The cysteines at positions 426 and 477 are disulfide-linked. Tyr484 provides a ligand contact to substrate. Residues 485 to 486 (WH) and Gly514 contribute to the FAD site. His486 functions as the Proton donor in the catalytic mechanism. The Proton acceptor role is filled by His524. 525–526 (PQ) provides a ligand contact to FAD.

Belongs to the GMC oxidoreductase family. Monomer. FAD is required as a cofactor. Post-translationally, glycosylated. Deglycosylation does not affect the enzymatic activity.

The enzyme catalyses (R)-mandelonitrile = benzaldehyde + hydrogen cyanide. Involved in cyanogenesis, the release of HCN from injured tissues. Catalyzes the stereospecific addition of HCN to a variety of aldehydes in vitro. Has no oxidase activity. The redox properties of the FAD cofactor appear to be unimportant for catalysis. This is (R)-mandelonitrile lyase 2 (MDL2) from Prunus dulcis (Almond).